A 694-amino-acid polypeptide reads, in one-letter code: Pentatricopeptide repeat-containing protein At3g12770 (694 aa).

PPR repeat units lie at residues 52 to 82, 83 to 117, 118 to 152, 153 to 183, 186 to 220, 221 to 255, 256 to 286, 287 to 321, 322 to 356, 357 to 387, 388 to 422, 423 to 457, and 458 to 488; these read SGFL…LPRP, QIFP…RVSP, DSFT…GFDA, DVFV…LPLP, TIVS…DVKP, DWVA…GLEI, EPDL…MKSP, NLIL…DVRP, DTIS…DYRD, DVFI…TLDR, DVVV…GVHP, NDVT…KINP, and QQQH…MPVQ. A type E motif region spans residues 493–568; that stretch reads VWGALLSACK…DVGCSWVEVR (76 aa). The segment at 569 to 599 is type E(+) motif; it reads GRLEAFRVGDKSHPRYEEIERQVEWIESRLK. The tract at residues 600-694 is type DYW motif; that stretch reads EGGFVANKDA…DGVCSCGDYW (95 aa).

This sequence belongs to the PPR family. PCMP-H subfamily.

The polypeptide is Pentatricopeptide repeat-containing protein At3g12770 (PCMP-H43) (Arabidopsis thaliana (Mouse-ear cress)).